The following is a 287-amino-acid chain: Small ribosomal subunit biogenesis GTPase RsgA (287 aa).

The region spanning K63–L223 is the CP-type G domain. Residues S113–D116 and G166–T174 contribute to the GTP site. Residues C246, C251, H253, and C259 each contribute to the Zn(2+) site.

Belongs to the TRAFAC class YlqF/YawG GTPase family. RsgA subfamily. As to quaternary structure, monomer. Associates with 30S ribosomal subunit, binds 16S rRNA. Zn(2+) serves as cofactor.

Its subcellular location is the cytoplasm. Its function is as follows. One of several proteins that assist in the late maturation steps of the functional core of the 30S ribosomal subunit. Helps release RbfA from mature subunits. May play a role in the assembly of ribosomal proteins into the subunit. Circularly permuted GTPase that catalyzes slow GTP hydrolysis, GTPase activity is stimulated by the 30S ribosomal subunit. This is Small ribosomal subunit biogenesis GTPase RsgA from Malacoplasma penetrans (strain HF-2) (Mycoplasma penetrans).